Consider the following 1453-residue polypeptide: Chromatin remodeling regulator CECR2 (1453 aa).

Residues 170–237 (VQGRSNGELS…DLQTRNGSRG (68 aa)) form a disordered region. The segment covering 197–209 (TGKRRGRPPKRKK) has biased composition (basic residues). Residues 210 to 222 (LQEEIISSEKQEE) show a composition bias toward basic and acidic residues. Residues 223-234 (NSLTSDLQTRNG) show a composition bias toward polar residues. Position 402 is a phosphoserine (serine 402). Positions 414–518 (FELDDDFTAM…RCFHRAMTKH (105 aa)) constitute a Bromo domain. Residue threonine 526 is modified to Phosphothreonine. Disordered stretches follow at residues 536 to 667 (EKRE…HPPF), 767 to 796 (HGTT…TLGH), 827 to 868 (GYMQ…GESM), 884 to 1020 (VCPP…DNSY), 1046 to 1072 (VVGE…LCPR), 1131 to 1308 (LASM…YLYG), 1331 to 1368 (MLQT…VATQ), and 1396 to 1453 (QTGT…LDQS). At serine 551 the chain carries Phosphoserine. The segment covering 637-649 (GSLQGSDPTNLHG) has biased composition (polar residues). Over residues 655-664 (EAPPGEPLQH) the composition is skewed to pro residues. The segment covering 887 to 905 (PGVPYHPRQPTPPQLPGPF) has biased composition (pro residues). Serine 983 bears the Phosphoserine mark. Basic and acidic residues predominate over residues 985–998 (QERETEDSQLKSDA). The span at 999-1020 (SDSADTYKTSKNKNTWPLDNSY) shows a compositional bias: polar residues. Asymmetric dimethylarginine occurs at positions 1166 and 1172. Composition is skewed to low complexity over residues 1173–1187 (YSYQ…HPYQ) and 1202–1211 (QRSLPSQRSP). Polar residues predominate over residues 1228-1250 (NVLSSLQGCETLNTALTSPTQMD). A compositionally biased stretch (basic and acidic residues) spans 1265–1289 (GPEEEKMDESVERPESPKEFLDLDN). Serine 1280 carries the phosphoserine modification. 2 stretches are compositionally biased toward polar residues: residues 1291–1304 (NAAT…STSD) and 1331–1346 (MLQT…SASH). Residues 1352 to 1364 (YPSPVPAHPPPHP) are compositionally biased toward pro residues.

In terms of assembly, component of the CERF-1 ISWI chromatin remodeling complex (also called the CECR2-containing remodeling factor (CERF) complex) at least composed of CECR2 and SMARCA1. Component of the CERF-5 ISWI chromatin remodeling complex at least composed of CECR2 and SMARCA5/SNF2H. LUZP1 is detected as part of the CERF-1 and CERF-5 complexes in embryonic stem (ES) cells where it is involved in complex stabilization but is not detected in the complexes in the testis. Interacts with CCAR2; CCAR2 may form part of the CERF-1 and/or CEF-5 ISWI chromatin remodeling complexes in ES cells. Interacts with acetylated lysine residues on histone H2A and H3 (in vitro). Interacts with LRPPRC.

The protein resides in the nucleus. Functionally, regulatory subunit of the ATP-dependent CERF-1 and CERF-5 ISWI chromatin remodeling complexes, which form ordered nucleosome arrays on chromatin and facilitate access to DNA during DNA-templated processes such as DNA replication, transcription, and repair. The complexes do not have the ability to slide mononucleosomes to the center of a DNA template. The CERF-1 ISWI chromatin remodeling complex has a lower ATP hydrolysis rate than the CERF-5 ISWI chromatin remodeling complex. Plays a role in various processes during development: required during embryogenesis for neural tube closure and inner ear development. In adults, required for spermatogenesis, via the formation of ISWI-type chromatin complexes. In histone-modifying complexes, CECR2 recognizes and binds acylated histones: binds histones that are acetylated and/or butyrylated. May also be involved through its interaction with LRPPRC in the integration of cytoskeletal network with vesicular trafficking, nucleocytosolic shuttling, transcription, chromosome remodeling and cytokinesis. This chain is Chromatin remodeling regulator CECR2, found in Mus musculus (Mouse).